The following is a 146-amino-acid chain: uncharacterized protein (146 aa).

One can recognise a Glutaredoxin domain in the interval 34-135; the sequence is EDKIVNDVMT…PLLEKAHALF (102 aa). Cys54 is a [2Fe-2S] cluster binding site.

This sequence belongs to the glutaredoxin family. Monothiol subfamily.

This is an uncharacterized protein from Caenorhabditis elegans.